Reading from the N-terminus, the 510-residue chain is NAD(P)H-quinone oxidoreductase subunit 2, chloroplastic (510 aa).

Helical transmembrane passes span 24 to 44, 59 to 79, 99 to 119, 124 to 144, 149 to 169, 183 to 203, 229 to 249, 295 to 315, 323 to 343, 347 to 367, 395 to 415, and 418 to 438; these read LLLFHGSFIFPECILIFGLIL, WFYFISSTSLVMSITALLFRW, IFQFLILLCSTLCIPLSVEYI, MAITEFLLFVLTATLGGMFLC, FITIFVAPECFSLCSYLLSGY, YLLMGGASSSILVHGFSWLYG, ISIALISITVGIGFKLSPAPF, WHLLLEILAILSMILGNLIAI, MLAYSSIGQIGYVIIGIIVGD, GYASMITYMLFYISMNLGTFA, ALSLALCLLSLGGLPPLAGFF, and LHLFWCGWQAGLYFLVSIGLL.

The protein belongs to the complex I subunit 2 family. In terms of assembly, NDH is composed of at least 16 different subunits, 5 of which are encoded in the nucleus.

It localises to the plastid. Its subcellular location is the chloroplast thylakoid membrane. It catalyses the reaction a plastoquinone + NADH + (n+1) H(+)(in) = a plastoquinol + NAD(+) + n H(+)(out). It carries out the reaction a plastoquinone + NADPH + (n+1) H(+)(in) = a plastoquinol + NADP(+) + n H(+)(out). NDH shuttles electrons from NAD(P)H:plastoquinone, via FMN and iron-sulfur (Fe-S) centers, to quinones in the photosynthetic chain and possibly in a chloroplast respiratory chain. The immediate electron acceptor for the enzyme in this species is believed to be plastoquinone. Couples the redox reaction to proton translocation, and thus conserves the redox energy in a proton gradient. The chain is NAD(P)H-quinone oxidoreductase subunit 2, chloroplastic from Phormium tenax (New Zealand flax).